Reading from the N-terminus, the 459-residue chain is MAP kinase-interacting serine/threonine-protein kinase 2 (459 aa).

Residues Leu-28–Lys-67 form a disordered region. Positions Lys-60–Lys-66 match the Nuclear localization signal motif. Ser-74 carries the phosphoserine modification. Positions Gln-84–Val-368 constitute a Protein kinase domain. Residues Leu-90–Val-98 and Lys-113 each bind ATP. Glu-160–Met-162 serves as a coordination point for staurosporine. Catalysis depends on Asp-205, which acts as the Proton acceptor. Glu-209 contributes to the staurosporine binding site. Thr-244 and Thr-249 each carry phosphothreonine. Zn(2+)-binding residues include Cys-299, Cys-311, and Cys-314. Position 379 is a phosphothreonine (Thr-379). Residues Ser-431 and Ser-434 each carry the phosphoserine modification. Residues Leu-438–Arg-442 carry the MAP kinase binding motif. Ser-446 carries the post-translational modification Phosphoserine. Residue Thr-450 is modified to Phosphothreonine.

This sequence belongs to the protein kinase superfamily. CAMK Ser/Thr protein kinase family. In terms of assembly, monomer. Interacts with the C-terminal regions of EIF4G1 and EIF4G2; this interaction is promoted when MAPK pathways are repressed but repressed upon ERK proteins activation. Also binds to dephosphorylated MAPK3/ERK1 and MAPK1/ER2K. Interaction with phosphorylated MAPK3/ERK1 and MAPK1/ER2K protects it from dephosphorylation and inactivation. Interacts with ESR2 and EIF4E in the nucleus. Mg(2+) is required as a cofactor. It depends on Zn(2+) as a cofactor. In terms of processing, dual phosphorylation of Thr-244 and Thr-249 activates the kinase. Phosphorylation of Thr-379 activates the kinase. Phosphorylated upon arsenic trioxide As(2)O(3) treatment. Phosphorylated by MAPK1/ERK2, MAPK11 and MAPK14. Dephosphorylated by PP2A.

The protein localises to the cytoplasm. It is found in the nucleus. The protein resides in the PML body. The enzyme catalyses L-seryl-[protein] + ATP = O-phospho-L-seryl-[protein] + ADP + H(+). It catalyses the reaction L-threonyl-[protein] + ATP = O-phospho-L-threonyl-[protein] + ADP + H(+). Its activity is regulated as follows. Inhibited by CGP57380 and staurosporine. Serine/threonine-protein kinase that phosphorylates SFPQ/PSF, HNRNPA1 and EIF4E. May play a role in the response to environmental stress and cytokines. Appears to regulate translation by phosphorylating EIF4E, thus increasing the affinity of this protein for the 7-methylguanosine-containing mRNA cap. Required for mediating PP2A-inhibition-induced EIF4E phosphorylation. Triggers EIF4E shuttling from cytoplasm to nucleus. Enhances the formation of EIF4F complex in pachytene spermatocytes, thus promoting mRNA translation during spermatogenesis. Displays a high basal kinase activity. Acts as a mediator of the suppressive effects of IFNgamma on hematopoiesis. Negative regulator for signals that control generation of arsenic trioxide As(2)O(3)-dependent apoptosis and anti-leukemic responses. Involved in anti-apoptotic signaling in response to serum withdrawal. The chain is MAP kinase-interacting serine/threonine-protein kinase 2 (Mknk2) from Rattus norvegicus (Rat).